A 634-amino-acid chain; its full sequence is 1-deoxy-D-xylulose-5-phosphate synthase (634 aa).

Residues His74 and Ala115–Ser117 each bind thiamine diphosphate. Asp146 provides a ligand contact to Mg(2+). Thiamine diphosphate is bound by residues Gly147–Ala148, Asn176, Tyr283, and Glu365. Asn176 is a Mg(2+) binding site.

This sequence belongs to the transketolase family. DXPS subfamily. As to quaternary structure, homodimer. Requires Mg(2+) as cofactor. The cofactor is thiamine diphosphate.

The catalysed reaction is D-glyceraldehyde 3-phosphate + pyruvate + H(+) = 1-deoxy-D-xylulose 5-phosphate + CO2. The protein operates within metabolic intermediate biosynthesis; 1-deoxy-D-xylulose 5-phosphate biosynthesis; 1-deoxy-D-xylulose 5-phosphate from D-glyceraldehyde 3-phosphate and pyruvate: step 1/1. In terms of biological role, catalyzes the acyloin condensation reaction between C atoms 2 and 3 of pyruvate and glyceraldehyde 3-phosphate to yield 1-deoxy-D-xylulose-5-phosphate (DXP). This is 1-deoxy-D-xylulose-5-phosphate synthase from Burkholderia lata (strain ATCC 17760 / DSM 23089 / LMG 22485 / NCIMB 9086 / R18194 / 383).